We begin with the raw amino-acid sequence, 145 residues long: Brain and acute leukemia cytoplasmic protein (145 aa).

Gly2 carries the N-myristoyl glycine lipid modification. Cys3 is lipidated: S-palmitoyl cysteine. The tract at residues Cys3–Ala35 is interaction with CAMK2A. A disordered region spans residues Trp27–Ala119. Low complexity predominate over residues Asp32–Pro46. A compositionally biased stretch (polar residues) spans Cys83–Thr108. The span at Glu109–Ala119 shows a compositional bias: basic and acidic residues.

Interacts with CAMK2A. Post-translationally, palmitoylation and myristoylation target the protein to the lipid rafts. In terms of tissue distribution, predominantly expressed in neuroectoderm-derived tissues. Expressed in the brain and spinal cord, and at low levels, in the adrenal gland. In the bone marrow, confined to the CD34+ progenitor cells. Not found in peripheral blood mononuclear cells, nor lymph nodes. Tends to be expressed at high levels in acute myeloid leukemia and glioblastoma cells.

It is found in the cytoplasm. The protein resides in the synapse. Its subcellular location is the synaptosome. It localises to the membrane raft. The protein localises to the postsynaptic density. Its function is as follows. May play a synaptic role at the postsynaptic lipid rafts possibly through interaction with CAMK2A. The polypeptide is Brain and acute leukemia cytoplasmic protein (Homo sapiens (Human)).